Reading from the N-terminus, the 208-residue chain is Proteasome subunit beta 2 (208 aa).

Residues 1–14 constitute a propeptide, removed in mature form; by autocatalysis; it reads MGNELQLENKILKG. Catalysis depends on Thr15, which acts as the Nucleophile.

Belongs to the peptidase T1B family. In terms of assembly, the 20S proteasome core is composed of 14 alpha and 14 beta subunits that assemble into four stacked heptameric rings, resulting in a barrel-shaped structure. The two inner rings, each composed of seven catalytic beta subunits, are sandwiched by two outer rings, each composed of seven alpha subunits. The catalytic chamber with the active sites is on the inside of the barrel. Has a gated structure, the ends of the cylinder being occluded by the N-termini of the alpha-subunits. Is capped at one or both ends by the proteasome regulatory ATPase, PAN.

The protein localises to the cytoplasm. The catalysed reaction is Cleavage of peptide bonds with very broad specificity.. Its activity is regulated as follows. The formation of the proteasomal ATPase PAN-20S proteasome complex, via the docking of the C-termini of PAN into the intersubunit pockets in the alpha-rings, triggers opening of the gate for substrate entry. Interconversion between the open-gate and close-gate conformations leads to a dynamic regulation of the 20S proteasome proteolysis activity. Its function is as follows. Component of the proteasome core, a large protease complex with broad specificity involved in protein degradation. The chain is Proteasome subunit beta 2 from Saccharolobus solfataricus (strain ATCC 35092 / DSM 1617 / JCM 11322 / P2) (Sulfolobus solfataricus).